We begin with the raw amino-acid sequence, 381 residues long: Alkanesulfonate monooxygenase (381 aa).

The protein belongs to the SsuD family. In terms of assembly, homotetramer.

The enzyme catalyses an alkanesulfonate + FMNH2 + O2 = an aldehyde + FMN + sulfite + H2O + 2 H(+). Its function is as follows. Catalyzes the desulfonation of aliphatic sulfonates. In Escherichia coli O127:H6 (strain E2348/69 / EPEC), this protein is Alkanesulfonate monooxygenase.